The sequence spans 336 residues: UPF0065 protein in tcbD-tcbE intergenic region (336 aa).

The N-terminal stretch at 1 to 32 (MHSSKCPDLANIGRRRVLAGIALAMTTSSTRA) is a signal peptide.

Belongs to the UPF0065 (bug) family.

It is found in the periplasm. In Pseudomonas sp. (strain P51), this protein is UPF0065 protein in tcbD-tcbE intergenic region.